A 38-amino-acid chain; its full sequence is Large ribosomal subunit protein bL36 (38 aa).

It belongs to the bacterial ribosomal protein bL36 family.

This Bacteroides fragilis (strain ATCC 25285 / DSM 2151 / CCUG 4856 / JCM 11019 / LMG 10263 / NCTC 9343 / Onslow / VPI 2553 / EN-2) protein is Large ribosomal subunit protein bL36.